The chain runs to 151 residues: Ribosomal RNA large subunit methyltransferase H (151 aa).

Residues Gly100 and 119-124 (LSRMTF) each bind S-adenosyl-L-methionine.

This sequence belongs to the RNA methyltransferase RlmH family. As to quaternary structure, homodimer.

The protein localises to the cytoplasm. The catalysed reaction is pseudouridine(1915) in 23S rRNA + S-adenosyl-L-methionine = N(3)-methylpseudouridine(1915) in 23S rRNA + S-adenosyl-L-homocysteine + H(+). Specifically methylates the pseudouridine at position 1915 (m3Psi1915) in 23S rRNA. The protein is Ribosomal RNA large subunit methyltransferase H of Thermotoga neapolitana (strain ATCC 49049 / DSM 4359 / NBRC 107923 / NS-E).